The primary structure comprises 169 residues: Allophycocyanin subunit beta-18 (169 aa).

At asparagine 72 the chain carries N4-methylasparagine. Cysteine 82 serves as a coordination point for (2R,3E)-phycocyanobilin.

The protein belongs to the phycobiliprotein family. As to quaternary structure, heterodimer of an alpha and a beta chain. Post-translationally, contains one covalently linked phycocyanobilin chromophore.

The protein localises to the plastid. The protein resides in the cyanelle thylakoid membrane. In terms of biological role, light-harvesting photosynthetic bile pigment-protein from the phycobiliprotein complex. Allophycocyanin has a maximum absorption at approximately 650 nanometers. The polypeptide is Allophycocyanin subunit beta-18 (apcF) (Cyanophora paradoxa).